The chain runs to 465 residues: MSVELNDLGRVHFIGIGGAGMSGIVRIMLARGISVSGSDAKESAGLLELGALGASVHAGHAAQNVAGADTVVISTAIRANNPELEFARTQGLRVLHRSEALAAAMAQDTVVAVAGTHGKTTTTAMIAVLLREAGLDPSFAVGGTVPALGVNAAHGAGGIFVAEADESDGSFLNYRPQIAVVTNAEPDHLDHYGTAEAVMEAFQSFIGLIPADGLLVACTDDDGALALAKQAAARGTRVVTYGRSAAAEVWLINDGAHRAIEFITPIGPQRLVLELQVPGEHNALNALAAFAVALELGVEAEQALSALAGFTGAARRFEFKGQVRGIRVFDDYAHHPTEVRAALTAARTVADGHHVLVLFQPHLFSRTHEFAAEFAAALSLADSIMVLDVYPAREDPIPGVTGELITEANAKLTFQPDRAKAIQELVARTANGDIVLTVGAGDVTEAGAAILDALATPAQEVSHGG.

An ATP-binding site is contributed by 115–121 (GTHGKTT).

This sequence belongs to the MurCDEF family.

It localises to the cytoplasm. The catalysed reaction is UDP-N-acetyl-alpha-D-muramate + L-alanine + ATP = UDP-N-acetyl-alpha-D-muramoyl-L-alanine + ADP + phosphate + H(+). The protein operates within cell wall biogenesis; peptidoglycan biosynthesis. Cell wall formation. The protein is UDP-N-acetylmuramate--L-alanine ligase of Renibacterium salmoninarum (strain ATCC 33209 / DSM 20767 / JCM 11484 / NBRC 15589 / NCIMB 2235).